The primary structure comprises 775 residues: Probable ubiquitin carboxyl-terminal hydrolase creB (775 aa).

The segment at 1–45 is disordered; sequence MGSFLRSFRHNGGSTAPSVGAVPAKKEPQPPPMTPLEKRLLDMGP. Residues 36–45 are compositionally biased toward basic and acidic residues; it reads LEKRLLDMGP. In terms of domain architecture, USP spans 55-468; that stretch reads YGMENYGNTC…CAYVLFYQET (414 aa). C64 acts as the Nucleophile in catalysis. Disordered stretches follow at residues 113–146 and 238–269; these read EAEA…DSPE and ASKQ…KTPN. The segment covering 256-269 has biased composition (polar residues); that stretch reads SVDQSSSTGSKTPN. Residue H419 is the Proton acceptor of the active site. Positions 496–775 are disordered; it reads LKQNGFPQSP…LRKKSFSILS (280 aa). Composition is skewed to low complexity over residues 546–566 and 576–585; these read ESAP…SPLS and ERVTTVATPP. A coiled-coil region spans residues 586–653; the sequence is KNDALAKKER…ASKAEEDRRL (68 aa). The segment covering 589–662 has biased composition (basic and acidic residues); it reads ALAKKERARE…LSHENGKEKQ (74 aa). Over residues 668 to 679 the composition is skewed to basic residues; sequence RLKRGSKSLSHR. A compositionally biased stretch (low complexity) spans 705–725; that stretch reads SQTGPTSEQQQQQQQQQSPPN. Residues 739–757 show a composition bias toward basic and acidic residues; it reads TIREDEQVNHKDSKHERTG. Residues 758-775 are compositionally biased toward basic residues; the sequence is HGKWRSFSLRKKSFSILS.

Belongs to the peptidase C19 family. As to quaternary structure, interacts with creA, creC and qutD.

The enzyme catalyses Thiol-dependent hydrolysis of ester, thioester, amide, peptide and isopeptide bonds formed by the C-terminal Gly of ubiquitin (a 76-residue protein attached to proteins as an intracellular targeting signal).. Functionally, ubiquitin thioesterase component of the regulatory network controlling carbon source utilization through ubiquitination and deubiquitination involving creA, creB, creC, creD and acrB. Deubiquitinates the creA catabolic repressor and the quinate permease qutD. Also plays a role in response to carbon starvation and the control of extracellular proteases activity. This Aspergillus fumigatus (strain ATCC MYA-4609 / CBS 101355 / FGSC A1100 / Af293) (Neosartorya fumigata) protein is Probable ubiquitin carboxyl-terminal hydrolase creB (creB).